Consider the following 526-residue polypeptide: Meiotically up-regulated gene 99 protein, mitochondrial (526 aa).

2 helical membrane-spanning segments follow: residues 398–418 (TLYT…LYFV) and 421–441 (FSLY…LYYL).

Its subcellular location is the mitochondrion membrane. In terms of biological role, required for correct meiotic chromosome segregation. Appears to also have role in sporulation. This Schizosaccharomyces pombe (strain 972 / ATCC 24843) (Fission yeast) protein is Meiotically up-regulated gene 99 protein, mitochondrial (mug99).